A 1515-amino-acid chain; its full sequence is Metal resistance protein YCF1 (1515 aa).

Residues 1–32 (MAGNLVSWACKLCRSPEGFGPISFYGDFTQCF) lie on the Vacuolar side of the membrane. A helical membrane pass occupies residues 33–53 (IDGVILNLSAIFMITFGIRDL). The Cytoplasmic portion of the chain corresponds to 54–73 (VNLCKKKHSGIKYRRNWIIV). Residues 74 to 94 (SRMALVLLEIAFVSLASLNIS) traverse the membrane as a helical segment. Over 95–99 (KEEAE) the chain is Vacuolar. A helical transmembrane segment spans residues 100 to 120 (NFTIVSQYASTMLSLFVALAL). At 121–130 (HWIEYDRSVV) the chain is on the cytoplasmic side. The chain crosses the membrane as a helical span at residues 131 to 151 (ANTVLLFYWLFETFGNFAKLI). Residues 152-169 (NILIRHTYEGIWYSGQTG) are Vacuolar-facing. A helical transmembrane segment spans residues 170–190 (FILTLFQVITCASILLLEALP). Residues 191 to 278 (KKPLMPHQHI…QKSNPSLSWA (88 aa)) lie on the Cytoplasmic side of the membrane. Phosphoserine is present on serine 251. Residues 279 to 299 (ICRTFGSKMLLAAFFKAIHDV) traverse the membrane as a helical segment. The ABC transmembrane type-1 1 domain occupies 287–590 (MLLAAFFKAI…IPMVLNSFIE (304 aa)). The Vacuolar portion of the chain corresponds to 300-345 (LAFTQPQLLRILIKFVTDYNSERQDDHSSLQGFENNHPQKLPIVRG). The helical transmembrane segment at 346–366 (FLIAFAMFLVGFTQTSVLHQY) threads the bilayer. Over 367-422 (FLNVFNTGMYIKSALTALIYQKSLVLSNEASGLSSTGDIVNLMSVDVQKLQDLTQW) the chain is Cytoplasmic. Residues 423–443 (LNLIWSGPFQIIICLYSLYKL) traverse the membrane as a helical segment. The Vacuolar portion of the chain corresponds to 444–446 (LGN). Residues 447 to 467 (SMWVGVIILVIMMPLNSFLMR) form a helical membrane-spanning segment. Over 468–530 (IQKKLQKSQM…NLTKLGCYMA (63 aa)) the chain is Cytoplasmic. The helical transmembrane segment at 531-551 (VTSFQFNIVPFLVSCCTFAVF) threads the bilayer. Residues 552-572 (VYTEDRALTTDLVFPALTLFN) lie on the Vacuolar side of the membrane. Residues 573–593 (LLSFPLMIIPMVLNSFIEASV) traverse the membrane as a helical segment. The Cytoplasmic segment spans residues 594–943 (SIGRLFTFFT…VKWNIYLEYA (350 aa)). The 228-residue stretch at 626–853 (INIGDDATFL…ADSPLWKLLN (228 aa)) folds into the ABC transporter 1 domain. ATP is bound at residue 663 to 670 (GKVGSGKT). Phosphoserine occurs at positions 873, 903, and 908. At threonine 911 the chain carries Phosphothreonine. Phosphoserine is present on serine 914. The chain crosses the membrane as a helical span at residues 944–964 (KACNPKSVCVFILFIVISMFL). Residues 951–1235 (VCVFILFIVI…IVRMTVEVET (285 aa)) enclose the ABC transmembrane type-1 2 domain. The Vacuolar segment spans residues 965–1001 (SVMGNVWLKHWSEVNSRYGSNPNAARYLAIYFALGIG). The helical transmembrane segment at 1002-1023 (SALATLIQTIVLWVFCTIHASK) threads the bilayer. The Cytoplasmic portion of the chain corresponds to 1024 to 1066 (YLHNLMTNSVLRAPMTFFETTPIGRILNRFSNDIYKVDALLGR). A helical transmembrane segment spans residues 1067–1087 (TFSQFFVNAVKVTFTITVICA). A topological domain (vacuolar) is located at residue threonine 1088. A helical membrane pass occupies residues 1089 to 1109 (TWQFIFIIIPLSVFYIYYQQY). Residues 1110-1180 (YLRTSRELRR…NANRWLAYRL (71 aa)) lie on the Cytoplasmic side of the membrane. Residues 1181-1201 (ELIGSIIILGAATLSVFRLKQ) form a helical membrane-spanning segment. The Vacuolar portion of the chain corresponds to 1202–1205 (GTLT). A helical membrane pass occupies residues 1206 to 1226 (AGMVGLSLSYALQITQTLNWI). Residues 1227 to 1515 (VRMTVEVETN…CMEAGLVNEN (289 aa)) lie on the Cytoplasmic side of the membrane. The 236-residue stretch at 1272–1507 (IKFNNYSTRY…NKSLFYSLCM (236 aa)) folds into the ABC transporter 2 domain. 1306–1313 (GRTGAGKS) contributes to the ATP binding site.

The protein belongs to the ABC transporter superfamily. ABCC family. Conjugate transporter (TC 3.A.1.208) subfamily.

Its subcellular location is the vacuole membrane. It catalyses the reaction Cd(2+)(in) + ATP + H2O = Cd(2+)(out) + ADP + phosphate + H(+). It carries out the reaction an S-substituted glutathione(in) + ATP + H2O = an S-substituted glutathione(out) + ADP + phosphate + H(+). Its function is as follows. Cooperates for the ATP-dependent vacuolar transport of bilirubin and glutathione conjugates. In Saccharomyces cerevisiae (strain ATCC 204508 / S288c) (Baker's yeast), this protein is Metal resistance protein YCF1 (YCF1).